We begin with the raw amino-acid sequence, 459 residues long: MAP kinase-interacting serine/threonine-protein kinase 2 (459 aa).

A disordered region spans residues 28-67 (LDPAQHGDSDFSPQCEARPDMPSSQPIDIPDAKKRGRKKK). The short motif at 60-66 (KKRGRKK) is the Nuclear localization signal element. Serine 74 bears the Phosphoserine mark. One can recognise a Protein kinase domain in the interval 84-368 (QLQEDVLGEG…AAQVLQHPWV (285 aa)). Residues 90–98 (LGEGAHARV) and lysine 113 each bind ATP. 160–162 (EKM) contributes to the staurosporine binding site. Aspartate 205 functions as the Proton acceptor in the catalytic mechanism. Glutamate 209 is a staurosporine binding site. 2 positions are modified to phosphothreonine: threonine 244 and threonine 249. Zn(2+) contacts are provided by cysteine 299, cysteine 311, and cysteine 314. Threonine 379 is subject to Phosphothreonine. 2 positions are modified to phosphoserine: serine 431 and serine 434. Residues 438–442 (LAQRR) carry the MAP kinase binding motif. Serine 446 is modified (phosphoserine). Threonine 450 is modified (phosphothreonine).

This sequence belongs to the protein kinase superfamily. CAMK Ser/Thr protein kinase family. As to quaternary structure, monomer. Interacts with the C-terminal regions of EIF4G1 and EIF4G2; this interaction is promoted when MAPK pathways are repressed but repressed upon ERK proteins activation. Also binds to dephosphorylated MAPK3/ERK1 and MAPK1/ER2K. Interaction with phosphorylated MAPK3/ERK1 and MAPK1/ER2K protects it from dephosphorylation and inactivation. Interacts with ESR2 and EIF4E in the nucleus. Requires Mg(2+) as cofactor. It depends on Zn(2+) as a cofactor. Post-translationally, dual phosphorylation of Thr-244 and Thr-249 activates the kinase. Phosphorylation of Thr-379 activates the kinase. Phosphorylated upon arsenic trioxide As(2)O(3) treatment. Phosphorylated by MAPK1/ERK2, MAPK11 and MAPK14. Dephosphorylated by PP2A.

Its subcellular location is the cytoplasm. It localises to the nucleus. It is found in the PML body. The catalysed reaction is L-seryl-[protein] + ATP = O-phospho-L-seryl-[protein] + ADP + H(+). It catalyses the reaction L-threonyl-[protein] + ATP = O-phospho-L-threonyl-[protein] + ADP + H(+). Its activity is regulated as follows. Inhibited by CGP57380 and staurosporine. Serine/threonine-protein kinase that phosphorylates SFPQ/PSF, HNRNPA1 and EIF4E. May play a role in the response to environmental stress and cytokines. Appears to regulate translation by phosphorylating EIF4E, thus increasing the affinity of this protein for the 7-methylguanosine-containing mRNA cap. Required for mediating PP2A-inhibition-induced EIF4E phosphorylation. Triggers EIF4E shuttling from cytoplasm to nucleus. Enhances the formation of EIF4F complex in pachytene spermatocytes, thus promoting mRNA translation during spermatogenesis. Displays a high basal kinase activity. Acts as a mediator of the suppressive effects of IFNgamma on hematopoiesis. Negative regulator for signals that control generation of arsenic trioxide As(2)O(3)-dependent apoptosis and anti-leukemic responses. Involved in anti-apoptotic signaling in response to serum withdrawal. The chain is MAP kinase-interacting serine/threonine-protein kinase 2 (Mknk2) from Rattus norvegicus (Rat).